Reading from the N-terminus, the 347-residue chain is Heme A synthase (347 aa).

8 helical membrane passes run Val14 to Ile34, Phe96 to Met116, Phe129 to Ser149, Leu162 to Leu182, Val199 to Gly219, Phe260 to Leu280, Met287 to Tyr307, and Ile311 to Leu331. Heme is bound at residue His262. His317 provides a ligand contact to heme.

It belongs to the COX15/CtaA family. Type 2 subfamily. As to quaternary structure, interacts with CtaB. It depends on heme b as a cofactor.

The protein localises to the cell membrane. The enzyme catalyses Fe(II)-heme o + 2 A + H2O = Fe(II)-heme a + 2 AH2. The protein operates within porphyrin-containing compound metabolism; heme A biosynthesis; heme A from heme O: step 1/1. Its function is as follows. Catalyzes the conversion of heme O to heme A by two successive hydroxylations of the methyl group at C8. The first hydroxylation forms heme I, the second hydroxylation results in an unstable dihydroxymethyl group, which spontaneously dehydrates, resulting in the formyl group of heme A. This is Heme A synthase from Ehrlichia ruminantium (strain Gardel).